Reading from the N-terminus, the 438-residue chain is uncharacterized protein (438 aa).

Residues 1–19 (MKKLLLAASIICLASAGLA) form the signal peptide.

This is an uncharacterized protein from Rickettsia conorii (strain ATCC VR-613 / Malish 7).